Here is a 310-residue protein sequence, read N- to C-terminus: 5-oxoprolinase subunit C (310 aa).

This sequence belongs to the PxpC family. As to quaternary structure, forms a complex composed of PxpA, PxpB and PxpC.

It catalyses the reaction 5-oxo-L-proline + ATP + 2 H2O = L-glutamate + ADP + phosphate + H(+). In terms of biological role, catalyzes the cleavage of 5-oxoproline to form L-glutamate coupled to the hydrolysis of ATP to ADP and inorganic phosphate. This is 5-oxoprolinase subunit C from Escherichia coli (strain K12).